Here is a 541-residue protein sequence, read N- to C-terminus: Probable malate:quinone oxidoreductase (541 aa).

Positions 520-541 (AKPAAGAAQQAKPAKATADIAL) are disordered.

Belongs to the MQO family. It depends on FAD as a cofactor.

The catalysed reaction is (S)-malate + a quinone = a quinol + oxaloacetate. It participates in carbohydrate metabolism; tricarboxylic acid cycle; oxaloacetate from (S)-malate (quinone route): step 1/1. This is Probable malate:quinone oxidoreductase from Ralstonia nicotianae (strain ATCC BAA-1114 / GMI1000) (Ralstonia solanacearum).